Consider the following 323-residue polypeptide: 8-oxo-dGDP phosphatase NUDT18 (323 aa).

The Nudix hydrolase domain maps to 37–167 (RLRKNVCYVV…DILHLVELAA (131 aa)). Residue L58 coordinates Mg(2+). The Nudix box signature appears at 76 to 97 (GRMEPGETIVEALQREVKEEAG).

The protein belongs to the Nudix hydrolase family. Mn(2+) is required as a cofactor. Mg(2+) serves as cofactor.

The enzyme catalyses 8-oxo-dGDP + H2O = 8-oxo-dGMP + phosphate + H(+). It carries out the reaction 8-oxo-dADP + H2O = 8-oxo-dAMP + phosphate + H(+). The catalysed reaction is 2-oxo-dADP + H2O = 2-oxo-dAMP + phosphate + H(+). It catalyses the reaction 8-oxo-GDP + H2O = 8-oxo-GMP + phosphate + H(+). In terms of biological role, mediates the hydrolysis of oxidized nucleoside diphosphate derivatives. Hydrolyzes 8-oxo-7,8-dihydroguanine (8-oxo-Gua)-containing deoxyribo- and ribonucleoside diphosphates to the monophosphates. Hydrolyzes 8-oxo-dGDP and 8-oxo-GDP with the same efficiencies. Also hydrolyzes 8-OH-dADP and 2-OH-dADP. Exhibited no or minimal hydrolysis activity against 8-oxo-dGTP, 8-oxo-GTP, dGTP, GTP, dGDP and GDP. Probably removes oxidized guanine nucleotides from both the DNA and RNA precursor pools. In Homo sapiens (Human), this protein is 8-oxo-dGDP phosphatase NUDT18.